The following is a 44-amino-acid chain: MKRTFQPSNIRRNRTHGFRARMSSKSGRNIISHRRSKLRSVLCV.

The protein belongs to the bacterial ribosomal protein bL34 family.

The chain is Large ribosomal subunit protein bL34 from Buchnera aphidicola subsp. Cinara cedri (strain Cc).